A 360-amino-acid chain; its full sequence is Peptide chain release factor 1 (360 aa).

Residue glutamine 233 is modified to N5-methylglutamine. The disordered stretch occupies residues 286-305; the sequence is NEIAQERKSQVGTGDRSERI.

The protein belongs to the prokaryotic/mitochondrial release factor family. Methylated by PrmC. Methylation increases the termination efficiency of RF1.

The protein resides in the cytoplasm. Functionally, peptide chain release factor 1 directs the termination of translation in response to the peptide chain termination codons UAG and UAA. The polypeptide is Peptide chain release factor 1 (Acetivibrio thermocellus (strain ATCC 27405 / DSM 1237 / JCM 9322 / NBRC 103400 / NCIMB 10682 / NRRL B-4536 / VPI 7372) (Clostridium thermocellum)).